The sequence spans 511 residues: MSNTKDVDADASNLLASLSVSKEKKEDTSNILAGLSLNGDESNKKEGSGVKDTESDKQKGNGKVEKVEKDENKDKSQSEAKDDSKRETNLIENRYEVEVKLDDIQADPNSPLYSVKSFEELGLKPELLKGLYAMKFNKPSKIQERALPLLISNPPKNMIGQSQSGTGKTAAFSLTMLSRVDESIKAPQCICLAPTRELARQTLEVVETMGKYSNITYQLVVPDSVPRGQAISAQVLVGTPGIVHDLINRKAINVAKVKVFVLDEADNMLDAQGLADTCLRVKKRLPRDCQLVLFSATFPTEVRKYAEKFVPNANSLALKQEELNVKGIKQLYMDCKNQEHKFEVLCELYGLLTIGSSIIFVEQKATADSLYLRMKEEGHTVSILHGGLEVADRDRLIDDFREGRSKVLITTNVLARGIDIATVSMVVNYDLPRTKEGRPDPSTYLHRIGRTGRFGRVGVSVSFVANEKDYQTLKYIAEYFGIEDQMTVVPTDDWDEVEKIVTRVIKEKKMT.

A disordered region spans residues Leu18 to Asn89. The segment covering Glu41–Asn89 has biased composition (basic and acidic residues). Positions Lys116–Glu144 match the Q motif motif. The 168-residue stretch at Leu149–Leu316 folds into the Helicase ATP-binding domain. Residue Ser162–Thr169 coordinates ATP. Residues Asp263–Asp266 carry the DEAD box motif. In terms of domain architecture, Helicase C-terminal spans Gly327–Asp495.

The protein belongs to the DEAD box helicase family. DDX19/DBP5 subfamily. In terms of assembly, associates with the nuclear pore complex.

It is found in the cytoplasm. It localises to the nucleus. Its subcellular location is the nuclear pore complex. The protein resides in the nucleus membrane. It catalyses the reaction ATP + H2O = ADP + phosphate + H(+). ATP-dependent RNA helicase associated with the nuclear pore complex and essential for mRNA export from the nucleus. May participate in a terminal step of mRNA export through the removal of proteins that accompany mRNA through the nucleopore complex. May also be involved in early transcription. The chain is ATP-dependent RNA helicase DBP5 (DBP5) from Lodderomyces elongisporus (strain ATCC 11503 / CBS 2605 / JCM 1781 / NBRC 1676 / NRRL YB-4239) (Yeast).